The following is a 199-amino-acid chain: Protein GrpE (199 aa).

Over residues 1 to 24 the composition is skewed to basic and acidic residues; the sequence is MSKQNKKDWKKFRDEHKEEHKVEN. Residues 1-52 form a disordered region; the sequence is MSKQNKKDWKKFRDEHKEEHKVENEILEEETDEESQHQEPALGHPSYTALEE.

It belongs to the GrpE family. As to quaternary structure, homodimer.

The protein localises to the cytoplasm. Its function is as follows. Participates actively in the response to hyperosmotic and heat shock by preventing the aggregation of stress-denatured proteins, in association with DnaK and GrpE. It is the nucleotide exchange factor for DnaK and may function as a thermosensor. Unfolded proteins bind initially to DnaJ; upon interaction with the DnaJ-bound protein, DnaK hydrolyzes its bound ATP, resulting in the formation of a stable complex. GrpE releases ADP from DnaK; ATP binding to DnaK triggers the release of the substrate protein, thus completing the reaction cycle. Several rounds of ATP-dependent interactions between DnaJ, DnaK and GrpE are required for fully efficient folding. This chain is Protein GrpE, found in Legionella pneumophila (strain Lens).